Here is a 1080-residue protein sequence, read N- to C-terminus: Headcase protein (1080 aa).

7 disordered regions span residues 1-27 (MAPRRNSNISSSGNSTQQQHQQQLQQQ), 181-277 (IYLN…GNNG), 310-335 (SLSSSGAGSGSTSPSDSQSSGEISVS), 655-693 (PLESPVGTGATTTQVPNAQGSPTASGCSSNTIASKQPPK), 798-826 (SKYQQQQHQQQQQQRQQQHNLQPQQQHAT), 891-916 (SGCSSGSGSQPSLSPTASSNGNDGSK), and 940-974 (QRQQPPQQQVPQQQPHAASPTASLTSSSSSSNGWS). Residues 181–197 (IYLNGSGNRPTLANGSL) are compositionally biased toward polar residues. Residues 218–228 (NGGGGGGGAGV) show a composition bias toward gly residues. Over residues 232 to 251 (TKTPLSNNNGNSYAGLTPNP) the composition is skewed to polar residues. The span at 263-277 (NNGNTASNGSSGNNG) shows a compositional bias: low complexity. The segment covering 663–688 (GATTTQVPNAQGSPTASGCSSNTIAS) has biased composition (polar residues). The span at 801–826 (QQQQHQQQQQQRQQQHNLQPQQQHAT) shows a compositional bias: low complexity. The span at 900–913 (QPSLSPTASSNGND) shows a compositional bias: polar residues. Residues 941–974 (RQQPPQQQVPQQQPHAASPTASLTSSSSSSNGWS) show a composition bias toward low complexity.

As to expression, expressed in all imaginal cells of the embryo and larvae. Expressed in a subset of tracheal fusion cells from stage 14 to the end of embryogenesis in metameres 2-9, lateral trunk and ventral anastomoses.

Its subcellular location is the cytoplasm. In terms of biological role, required for imaginal cell differentiation, may be involved in hormonal responsiveness during metamorphosis. Involved in an inhibitory signaling mechanism to determine the number of cells that will form unicellular sprouts in the trachea. Regulated by transcription factor esg. The longer hdc protein is completely functional and the shorter protein carries some function. This chain is Headcase protein, found in Drosophila melanogaster (Fruit fly).